Reading from the N-terminus, the 57-residue chain is Small nuclear protein PRAC1 (57 aa).

Residues 38–57 (RSDGSACNSGISGGRGRKIP) are disordered.

Highly expressed in prostate, rectum, and distal colon, and weakly expressed in bladder. Expressed in prostate cancer cell lines.

It is found in the nucleus. This chain is Small nuclear protein PRAC1 (PRAC1), found in Homo sapiens (Human).